Consider the following 241-residue polypeptide: LexA repressor (241 aa).

The H-T-H motif DNA-binding region spans 41–61 (FREIGNAAGLKSPSSVKHQLQ). Active-site for autocatalytic cleavage activity residues include serine 165 and lysine 202.

Belongs to the peptidase S24 family. Homodimer.

It carries out the reaction Hydrolysis of Ala-|-Gly bond in repressor LexA.. Its function is as follows. Represses a number of genes involved in the response to DNA damage (SOS response), including recA and lexA. In the presence of single-stranded DNA, RecA interacts with LexA causing an autocatalytic cleavage which disrupts the DNA-binding part of LexA, leading to derepression of the SOS regulon and eventually DNA repair. This chain is LexA repressor, found in Bifidobacterium longum subsp. infantis (strain ATCC 15697 / DSM 20088 / JCM 1222 / NCTC 11817 / S12).